Reading from the N-terminus, the 253-residue chain is MTVHFIGAGPGAADLITVRGRDLIGRCPVCLYAGSIVSPELLRYCPPGARIVDTAPMSLDEIEAEYVKAEAEGLDVARLHSGDLSVWSAVAEQIRRLEKHGIAYTMTPGVPSFAAAASALGRELTIPAVAQSLVLTRVSGRASPMPNSETLSAFGATGSTLAIHLAIHALQQVVEELTPLYGADCPVAIVVKASWPDERVVRGTLGDIAAKVAEEPIERTALIFVGPGLEASDFRESSLYDPAYQRRFRGRGE.

The protein belongs to the precorrin methyltransferase family.

It carries out the reaction precorrin-4 + S-adenosyl-L-methionine = precorrin-5 + S-adenosyl-L-homocysteine. It functions in the pathway cofactor biosynthesis; adenosylcobalamin biosynthesis; cob(II)yrinate a,c-diamide from precorrin-2 (aerobic route): step 4/10. Catalyzes the methylation of C-11 in precorrin-4 to form precorrin-5. This is Precorrin-4 C(11)-methyltransferase (cobM) from Sinorhizobium sp.